The chain runs to 421 residues: Serine/threonine-protein kinase OXI1 (421 aa).

Residues 17 to 329 form the Protein kinase domain; sequence LEVLSLLGRG…VEEIKGHDFF (313 aa). ATP is bound by residues 23 to 31 and K45; that span reads LGRGAKGVV. D149 acts as the Proton acceptor in catalysis. An activation loop region spans residues 167 to 246; that stretch reads DFDLSTNLAP…VGTEEYVAPE (80 aa). S235 carries the phosphoserine; by PDPK1 modification. The AGC-kinase C-terminal domain maps to 330 to 421; it reads RGVDWEKVIL…LESDNNFLVF (92 aa). The PIF motif lies at 418–421; it reads FLVF.

This sequence belongs to the protein kinase superfamily. AGC Ser/Thr protein kinase family. In terms of assembly, interacts with PDK1 and PDK2. Expressed in roots and root hair cells.

The enzyme catalyses L-seryl-[protein] + ATP = O-phospho-L-seryl-[protein] + ADP + H(+). It catalyses the reaction L-threonyl-[protein] + ATP = O-phospho-L-threonyl-[protein] + ADP + H(+). With respect to regulation, activated in response to hydrogen peroxide and cellulase elicitor. Activated by PDK1 in a phosphatidic acid dependent manner. Its function is as follows. Involved in oxidative burst-mediated signaling. Required for basal resistance to P.parasitica infection and root hair growth. Partly required for the activation of MPK3 and MPK6 by hydrogen peroxide and cellulase elicitor. The polypeptide is Serine/threonine-protein kinase OXI1 (Arabidopsis thaliana (Mouse-ear cress)).